The primary structure comprises 116 residues: MDKKTSRLRRAIRARKKIQELGVNRLVVHRTPRHIYAQVINPEAQVVAAASTVEKAVKEQLKSTGNVDAAKAVGKFVAERAIEKGVTSVAFDRSGFKYHGRVAALADAAREAGLQF.

It belongs to the universal ribosomal protein uL18 family. As to quaternary structure, part of the 50S ribosomal subunit; part of the 5S rRNA/L5/L18/L25 subcomplex. Contacts the 5S and 23S rRNAs.

This is one of the proteins that bind and probably mediate the attachment of the 5S RNA into the large ribosomal subunit, where it forms part of the central protuberance. This chain is Large ribosomal subunit protein uL18, found in Shewanella putrefaciens (strain CN-32 / ATCC BAA-453).